Here is a 534-residue protein sequence, read N- to C-terminus: 26S proteasome non-ATPase regulatory subunit 3 (534 aa).

Residues 1–16 are compositionally biased toward basic and acidic residues; the sequence is MKQEGSARRRGADKAK. The disordered stretch occupies residues 1–69; that stretch reads MKQEGSARRR…AEHSQRELDT (69 aa). Pro residues predominate over residues 17–32; that stretch reads PPPGGGEQEPPPPPAP. Lys38 participates in a covalent cross-link: Glycyl lysine isopeptide (Lys-Gly) (interchain with G-Cter in SUMO1); alternate. Lys38 participates in a covalent cross-link: Glycyl lysine isopeptide (Lys-Gly) (interchain with G-Cter in SUMO2); alternate. The region spanning 286 to 465 is the PCI domain; sequence ARYLYYTGRI…GYVQSKEMID (180 aa). Ser418 and Ser430 each carry phosphoserine. Residues 500–534 form a disordered region; it reads SYNKDLESAEERREREQQDLEFAKEMAEDDDDSFP. The span at 501 to 525 shows a compositional bias: basic and acidic residues; that stretch reads YNKDLESAEERREREQQDLEFAKEM.

Belongs to the proteasome subunit S3 family. Component of the 19S proteasome regulatory particle complex. The 26S proteasome consists of a 20S core particle (CP) and two 19S regulatory subunits (RP). The regulatory particle is made of a lid composed of 9 subunits including PSMD3, a base containing 6 ATPases and few additional components. Interacts with UBQLN1 (via ubiquitin-like domain). Interacts with ERCC6.

Component of the 26S proteasome, a multiprotein complex involved in the ATP-dependent degradation of ubiquitinated proteins. This complex plays a key role in the maintenance of protein homeostasis by removing misfolded or damaged proteins, which could impair cellular functions, and by removing proteins whose functions are no longer required. Therefore, the proteasome participates in numerous cellular processes, including cell cycle progression, apoptosis, or DNA damage repair. This is 26S proteasome non-ATPase regulatory subunit 3 (PSMD3) from Homo sapiens (Human).